Reading from the N-terminus, the 496-residue chain is Probable cytosol aminopeptidase (496 aa).

Positions 258 and 263 each coordinate Mn(2+). Residue Lys270 is part of the active site. Mn(2+)-binding residues include Asp281, Asp340, and Glu342. Residue Arg344 is part of the active site.

The protein belongs to the peptidase M17 family. Mn(2+) serves as cofactor.

It localises to the cytoplasm. The catalysed reaction is Release of an N-terminal amino acid, Xaa-|-Yaa-, in which Xaa is preferably Leu, but may be other amino acids including Pro although not Arg or Lys, and Yaa may be Pro. Amino acid amides and methyl esters are also readily hydrolyzed, but rates on arylamides are exceedingly low.. It carries out the reaction Release of an N-terminal amino acid, preferentially leucine, but not glutamic or aspartic acids.. Functionally, presumably involved in the processing and regular turnover of intracellular proteins. Catalyzes the removal of unsubstituted N-terminal amino acids from various peptides. This Helicobacter pylori (strain P12) protein is Probable cytosol aminopeptidase.